The sequence spans 426 residues: Dihydroorotase (426 aa).

Zn(2+) contacts are provided by histidine 58 and histidine 60. Residues 60 to 62 (HLR) and asparagine 92 each bind substrate. Zn(2+) is bound by residues aspartate 150, histidine 177, and histidine 230. Substrate is bound at residue asparagine 276. Aspartate 303 provides a ligand contact to Zn(2+). Residue aspartate 303 is part of the active site. Substrate is bound by residues histidine 307 and 321-322 (FG).

The protein belongs to the metallo-dependent hydrolases superfamily. DHOase family. Class I DHOase subfamily. Zn(2+) is required as a cofactor.

The catalysed reaction is (S)-dihydroorotate + H2O = N-carbamoyl-L-aspartate + H(+). It functions in the pathway pyrimidine metabolism; UMP biosynthesis via de novo pathway; (S)-dihydroorotate from bicarbonate: step 3/3. Its function is as follows. Catalyzes the reversible cyclization of carbamoyl aspartate to dihydroorotate. This chain is Dihydroorotase, found in Listeria monocytogenes serotype 4b (strain CLIP80459).